Reading from the N-terminus, the 90-residue chain is MLCAIYRSPKRDQTYLYIEKKDDFSRVPAELLASFGKPQFAMLLALNERKTLATADVEKVKNALIEQGFYLQVPPPPESLLKMHLGETKA.

Residues 1–85 (MLCAIYRSPK…PPESLLKMHL (85 aa)) form the YcgL domain.

This Yersinia pseudotuberculosis serotype O:1b (strain IP 31758) protein is YcgL domain-containing protein YpsIP31758_2009.